The sequence spans 163 residues: Cyclic pyranopterin monophosphate synthase (163 aa).

Substrate contacts are provided by residues 79 to 81 and 118 to 119; these read LCH and ME. Residue D133 is part of the active site.

Belongs to the MoaC family. Homohexamer; trimer of dimers.

The enzyme catalyses (8S)-3',8-cyclo-7,8-dihydroguanosine 5'-triphosphate = cyclic pyranopterin phosphate + diphosphate. The protein operates within cofactor biosynthesis; molybdopterin biosynthesis. In terms of biological role, catalyzes the conversion of (8S)-3',8-cyclo-7,8-dihydroguanosine 5'-triphosphate to cyclic pyranopterin monophosphate (cPMP). The sequence is that of Cyclic pyranopterin monophosphate synthase from Nocardioides sp. (strain ATCC BAA-499 / JS614).